Reading from the N-terminus, the 414-residue chain is Enolase (414 aa).

A (2R)-2-phosphoglycerate-binding site is contributed by glutamine 162. Glutamate 204 serves as the catalytic Proton donor. 3 residues coordinate Mg(2+): aspartate 239, glutamate 280, and aspartate 307. The (2R)-2-phosphoglycerate site is built by lysine 332, arginine 361, serine 362, and lysine 383. Lysine 332 (proton acceptor) is an active-site residue.

It belongs to the enolase family. Requires Mg(2+) as cofactor.

The protein resides in the cytoplasm. It is found in the secreted. It localises to the cell surface. It carries out the reaction (2R)-2-phosphoglycerate = phosphoenolpyruvate + H2O. It participates in carbohydrate degradation; glycolysis; pyruvate from D-glyceraldehyde 3-phosphate: step 4/5. Its function is as follows. Catalyzes the reversible conversion of 2-phosphoglycerate (2-PG) into phosphoenolpyruvate (PEP). It is essential for the degradation of carbohydrates via glycolysis. This is Enolase from Campylobacter jejuni subsp. jejuni serotype O:6 (strain 81116 / NCTC 11828).